A 194-amino-acid polypeptide reads, in one-letter code: dITP/XTP pyrophosphatase (194 aa).

A substrate-binding site is contributed by 8-13 (TSNPGK). E38 and D67 together coordinate Mg(2+). D67 functions as the Proton acceptor in the catalytic mechanism. Substrate is bound by residues S68, 152 to 155 (FGYD), K175, and 180 to 181 (HR).

It belongs to the HAM1 NTPase family. Homodimer. Requires Mg(2+) as cofactor.

The catalysed reaction is XTP + H2O = XMP + diphosphate + H(+). It catalyses the reaction dITP + H2O = dIMP + diphosphate + H(+). It carries out the reaction ITP + H2O = IMP + diphosphate + H(+). In terms of biological role, pyrophosphatase that catalyzes the hydrolysis of nucleoside triphosphates to their monophosphate derivatives, with a high preference for the non-canonical purine nucleotides XTP (xanthosine triphosphate), dITP (deoxyinosine triphosphate) and ITP. Seems to function as a house-cleaning enzyme that removes non-canonical purine nucleotides from the nucleotide pool, thus preventing their incorporation into DNA/RNA and avoiding chromosomal lesions. The sequence is that of dITP/XTP pyrophosphatase from Legionella pneumophila (strain Paris).